Consider the following 414-residue polypeptide: Gamma-glutamyl phosphate reductase (414 aa).

This sequence belongs to the gamma-glutamyl phosphate reductase family.

The protein localises to the cytoplasm. The catalysed reaction is L-glutamate 5-semialdehyde + phosphate + NADP(+) = L-glutamyl 5-phosphate + NADPH + H(+). It participates in amino-acid biosynthesis; L-proline biosynthesis; L-glutamate 5-semialdehyde from L-glutamate: step 2/2. In terms of biological role, catalyzes the NADPH-dependent reduction of L-glutamate 5-phosphate into L-glutamate 5-semialdehyde and phosphate. The product spontaneously undergoes cyclization to form 1-pyrroline-5-carboxylate. This chain is Gamma-glutamyl phosphate reductase, found in Clostridium botulinum (strain Alaska E43 / Type E3).